A 250-amino-acid polypeptide reads, in one-letter code: Uridylate kinase (250 aa).

19–22 (KLSG) is a binding site for ATP. Position 61 (G61) interacts with UMP. The ATP site is built by G62 and R66. UMP is bound by residues D81 and 142 to 149 (TGNPFFTT). Residues T169, Q170, Y175, and D178 each contribute to the ATP site.

This sequence belongs to the UMP kinase family. Homohexamer.

It is found in the cytoplasm. The catalysed reaction is UMP + ATP = UDP + ADP. It functions in the pathway pyrimidine metabolism; CTP biosynthesis via de novo pathway; UDP from UMP (UMPK route): step 1/1. With respect to regulation, inhibited by UTP. Its function is as follows. Catalyzes the reversible phosphorylation of UMP to UDP. The sequence is that of Uridylate kinase from Rhodospirillum rubrum (strain ATCC 11170 / ATH 1.1.1 / DSM 467 / LMG 4362 / NCIMB 8255 / S1).